We begin with the raw amino-acid sequence, 163 residues long: Epithelial membrane protein 3 (163 aa).

A helical membrane pass occupies residues 4–24 (LLLVVSALHILILVLLFVATL). Asn-46 and Asn-56 each carry an N-linked (GlcNAc...) asparagine glycan. Transmembrane regions (helical) follow at residues 66–86 (VQALMVLSLILCCLSFILFMF), 100–120 (TGLCQLCTSAAVFSGALIYAI), and 139–159 (FALAWVAFPLALVSGTVYIHL).

Belongs to the PMP-22/EMP/MP20 family.

Its subcellular location is the membrane. Its function is as follows. Probably involved in cell proliferation and cell-cell interactions. The chain is Epithelial membrane protein 3 (Emp3) from Mus musculus (Mouse).